The chain runs to 479 residues: Glutamyl-tRNA(Gln) amidotransferase subunit A (479 aa).

Catalysis depends on charge relay system residues Lys75 and Ser150. The active-site Acyl-ester intermediate is Ser174.

This sequence belongs to the amidase family. GatA subfamily. As to quaternary structure, heterotrimer of A, B and C subunits.

The enzyme catalyses L-glutamyl-tRNA(Gln) + L-glutamine + ATP + H2O = L-glutaminyl-tRNA(Gln) + L-glutamate + ADP + phosphate + H(+). In terms of biological role, allows the formation of correctly charged Gln-tRNA(Gln) through the transamidation of misacylated Glu-tRNA(Gln) in organisms which lack glutaminyl-tRNA synthetase. The reaction takes place in the presence of glutamine and ATP through an activated gamma-phospho-Glu-tRNA(Gln). The polypeptide is Glutamyl-tRNA(Gln) amidotransferase subunit A (Synechococcus elongatus (strain ATCC 33912 / PCC 7942 / FACHB-805) (Anacystis nidulans R2)).